Here is a 159-residue protein sequence, read N- to C-terminus: Small ribosomal subunit protein uS7c (159 aa).

The tract at residues 137-159 is disordered; it reads HAIRKKEETHKMAESNRAXAHYR. Over residues 141-150 the composition is skewed to basic and acidic residues; sequence KKEETHKMAE.

This sequence belongs to the universal ribosomal protein uS7 family. As to quaternary structure, part of the 30S ribosomal subunit.

It is found in the plastid. The protein localises to the chloroplast. In terms of biological role, one of the primary rRNA binding proteins, it binds directly to 16S rRNA where it nucleates assembly of the head domain of the 30S subunit. The protein is Small ribosomal subunit protein uS7c (rps7) of Sciadopitys verticillata (Japanese umbrella-pine).